The sequence spans 270 residues: uncharacterized protein (270 aa).

Residues Asp53, His55, Asp83, Asn116, His207, and His209 each contribute to the a divalent metal cation site.

It belongs to the metallophosphoesterase superfamily. The cofactor is a divalent metal cation.

This is an uncharacterized protein from Bacillus subtilis (strain 168).